The following is a 767-amino-acid chain: Syn-copalyl diphosphate synthase, chloroplastic (767 aa).

Residues methionine 1 to methionine 47 constitute a chloroplast transit peptide. A disordered region spans residues glycine 45–aspartate 74. The span at glutamate 59–aspartate 74 shows a compositional bias: basic and acidic residues. Lysine 233 serves as a coordination point for substrate. Aspartate 365 and aspartate 367 together coordinate Mg(2+). The DXDD motif signature appears at aspartate 365 to aspartate 368. Residue lysine 453 participates in substrate binding.

It belongs to the terpene synthase family. Mg(2+) serves as cofactor.

The protein resides in the plastid. It is found in the chloroplast. The catalysed reaction is (2E,6E,10E)-geranylgeranyl diphosphate = 9alpha-copalyl diphosphate. Its function is as follows. Catalyzes the conversion of geranylgeranyl diphosphate to the phytoalexin precursor syn-copalyl diphosphate. Required for the biosynthesis of momilactones that exude from roots and act as allelochemicals against lowland weeds in paddy soil. This Oryza sativa subsp. japonica (Rice) protein is Syn-copalyl diphosphate synthase, chloroplastic.